The sequence spans 245 residues: Probable GTP-binding protein EngB (245 aa).

Positions 46–223 (DVPEIAFVGR…AQHLWDWAHP (178 aa)) constitute an EngB-type G domain. Residues 54–61 (GRSNAGKS), 81–85 (GRTQS), 103–106 (DLPG), 173–176 (TKSD), and 202–204 (FSS) contribute to the GTP site. Residues serine 61 and threonine 83 each contribute to the Mg(2+) site. A disordered region spans residues 219–245 (DWAHPPEKPAKKPKAEPAAEAATGDEG). The segment covering 222–235 (HPPEKPAKKPKAEP) has biased composition (basic and acidic residues). The span at 236 to 245 (AAEAATGDEG) shows a compositional bias: low complexity.

Belongs to the TRAFAC class TrmE-Era-EngA-EngB-Septin-like GTPase superfamily. EngB GTPase family. Mg(2+) is required as a cofactor.

In terms of biological role, necessary for normal cell division and for the maintenance of normal septation. In Polaromonas sp. (strain JS666 / ATCC BAA-500), this protein is Probable GTP-binding protein EngB.